A 232-amino-acid chain; its full sequence is Phosphoribosylformylglycinamidine synthase subunit PurQ (232 aa).

Positions 2–232 constitute a Glutamine amidotransferase type-1 domain; it reads RIGVITFPGS…SVVRSTLVEA (231 aa). C85 functions as the Nucleophile in the catalytic mechanism. Residues H194 and E196 contribute to the active site.

Part of the FGAM synthase complex composed of 1 PurL, 1 PurQ and 2 PurS subunits.

It localises to the cytoplasm. The enzyme catalyses N(2)-formyl-N(1)-(5-phospho-beta-D-ribosyl)glycinamide + L-glutamine + ATP + H2O = 2-formamido-N(1)-(5-O-phospho-beta-D-ribosyl)acetamidine + L-glutamate + ADP + phosphate + H(+). It catalyses the reaction L-glutamine + H2O = L-glutamate + NH4(+). Its pathway is purine metabolism; IMP biosynthesis via de novo pathway; 5-amino-1-(5-phospho-D-ribosyl)imidazole from N(2)-formyl-N(1)-(5-phospho-D-ribosyl)glycinamide: step 1/2. Its function is as follows. Part of the phosphoribosylformylglycinamidine synthase complex involved in the purines biosynthetic pathway. Catalyzes the ATP-dependent conversion of formylglycinamide ribonucleotide (FGAR) and glutamine to yield formylglycinamidine ribonucleotide (FGAM) and glutamate. The FGAM synthase complex is composed of three subunits. PurQ produces an ammonia molecule by converting glutamine to glutamate. PurL transfers the ammonia molecule to FGAR to form FGAM in an ATP-dependent manner. PurS interacts with PurQ and PurL and is thought to assist in the transfer of the ammonia molecule from PurQ to PurL. The chain is Phosphoribosylformylglycinamidine synthase subunit PurQ from Leifsonia xyli subsp. xyli (strain CTCB07).